A 206-amino-acid polypeptide reads, in one-letter code: LexA repressor (206 aa).

The H-T-H motif DNA-binding region spans 28–48 (VREIGQAVGLASSSTVHGHLS). Active-site for autocatalytic cleavage activity residues include S128 and K166.

Belongs to the peptidase S24 family. Homodimer.

It carries out the reaction Hydrolysis of Ala-|-Gly bond in repressor LexA.. Its function is as follows. Represses a number of genes involved in the response to DNA damage (SOS response), including recA and lexA. In the presence of single-stranded DNA, RecA interacts with LexA causing an autocatalytic cleavage which disrupts the DNA-binding part of LexA, leading to derepression of the SOS regulon and eventually DNA repair. The polypeptide is LexA repressor (Bacillus cytotoxicus (strain DSM 22905 / CIP 110041 / 391-98 / NVH 391-98)).